The sequence spans 191 residues: Fe/S biogenesis protein NfuA (191 aa).

Positions 149 and 152 each coordinate [4Fe-4S] cluster.

The protein belongs to the NfuA family. As to quaternary structure, homodimer. It depends on [4Fe-4S] cluster as a cofactor.

Its function is as follows. Involved in iron-sulfur cluster biogenesis. Binds a 4Fe-4S cluster, can transfer this cluster to apoproteins, and thereby intervenes in the maturation of Fe/S proteins. Could also act as a scaffold/chaperone for damaged Fe/S proteins. The sequence is that of Fe/S biogenesis protein NfuA from Pectobacterium atrosepticum (strain SCRI 1043 / ATCC BAA-672) (Erwinia carotovora subsp. atroseptica).